The primary structure comprises 312 residues: Zygote arrest protein 1.L (312 aa).

Disordered stretches follow at residues 79–133 and 150–205; these read RDVG…VRFP and FQDK…DQTR. Composition is skewed to polar residues over residues 86–95 and 113–128; these read NPRQDASVQC and PQQS…SPTK. Residues 152–196 are compositionally biased toward basic and acidic residues; it reads DKGENLSEKTEALRSEGSRGEGGRPEGKQEDGEIKEQTKMDKADQ. Residues 214 to 297 form a 3CxxC-type zinc finger; sequence KYGYYHCKDC…RQDLCGRCKG (84 aa).

The protein belongs to the ZAR1 family. Ovary.

Its subcellular location is the cytoplasm. The protein localises to the cytoplasmic ribonucleoprotein granule. MRNA-binding protein required for maternal mRNA storage, translation and degradation during oocyte maturation. Probably promotes formation of some phase-separated membraneless compartment that stores maternal mRNAs in oocytes: acts by undergoing liquid-liquid phase separation upon binding to maternal mRNAs. Binds to the 3'-UTR of maternal mRNAs in immature oocytes, inhibiting their translation. The sequence is that of Zygote arrest protein 1.L from Xenopus laevis (African clawed frog).